The chain runs to 92 residues: Non-specific lipid-transfer protein 2 (92 aa).

Intrachain disulfides connect Cys-4-Cys-52, Cys-14-Cys-28, Cys-29-Cys-74, and Cys-50-Cys-88.

Belongs to the plant LTP family. Expressed in seeds and, at very low levels, in pulp of fruit (at protein level).

Functionally, plant non-specific lipid-transfer proteins transfer phospholipids as well as galactolipids across membranes. May play a role in wax or cutin deposition in the cell walls of expanding epidermal cells and certain secretory tissues. The chain is Non-specific lipid-transfer protein 2 from Actinidia deliciosa (Kiwi).